The sequence spans 125 residues: Small ribosomal subunit protein uS12 (125 aa).

The segment at 9–28 is disordered; it reads RSERSKLKKKTKSPALKQCP. Asp-89 is modified (3-methylthioaspartic acid). The interval 104-125 is disordered; that stretch reads AQGVKDRKQGRSKYGTKRPKKA. Over residues 113-125 the composition is skewed to basic residues; sequence GRSKYGTKRPKKA.

It belongs to the universal ribosomal protein uS12 family. In terms of assembly, part of the 30S ribosomal subunit. Contacts proteins S8 and S17. May interact with IF1 in the 30S initiation complex.

In terms of biological role, with S4 and S5 plays an important role in translational accuracy. Interacts with and stabilizes bases of the 16S rRNA that are involved in tRNA selection in the A site and with the mRNA backbone. Located at the interface of the 30S and 50S subunits, it traverses the body of the 30S subunit contacting proteins on the other side and probably holding the rRNA structure together. The combined cluster of proteins S8, S12 and S17 appears to hold together the shoulder and platform of the 30S subunit. This chain is Small ribosomal subunit protein uS12, found in Rippkaea orientalis (strain PCC 8801 / RF-1) (Cyanothece sp. (strain PCC 8801)).